We begin with the raw amino-acid sequence, 221 residues long: Probable glutathione S-transferase (221 aa).

In terms of domain architecture, GST N-terminal spans 4 to 83 (EEVILLDFWP…YIEEVWKDKA (80 aa)). Glutathione contacts are provided by residues Ser-14, Lys-41, Ile-55, and 67–68 (ES). Residues 90 to 214 (DPYDRAQARF…PKVLEFVKVL (125 aa)) form the GST C-terminal domain.

This sequence belongs to the GST superfamily. HSP26 family. As to expression, root tip-specific expression.

The catalysed reaction is RX + glutathione = an S-substituted glutathione + a halide anion + H(+). The sequence is that of Probable glutathione S-transferase from Nicotiana tabacum (Common tobacco).